Reading from the N-terminus, the 63-residue chain is Conotoxin Tx-D0111 (63 aa).

The first 19 residues, M1–S19, serve as a signal peptide directing secretion. The propeptide occupies D20–S47.

It belongs to the conotoxin T superfamily. In terms of processing, contains 2 disulfide bonds that can be either 'C1-C3, C2-C4' or 'C1-C4, C2-C3', since these disulfide connectivities have been observed for conotoxins with cysteine framework V (for examples, see AC P0DQQ7 and AC P81755). As to expression, expressed by the venom duct.

The protein localises to the secreted. The sequence is that of Conotoxin Tx-D0111 from Conus textile (Cloth-of-gold cone).